The chain runs to 397 residues: Golgi-associated RAB2 interactor protein 2 (397 aa).

Disordered regions lie at residues 1 to 24 (MKKSNRKSPTRIDEKDDICVPDSK) and 342 to 397 (QTTL…KLLN). 3 stretches are compositionally biased toward basic and acidic residues: residues 10–24 (TRIDEKDDICVPDSK), 353–369 (EKSKEMSDRPREIRTMD), and 376–397 (KAEEPRSRRTDSDTSDKCKLLN).

It belongs to the GARIN family. As to quaternary structure, interacts with CALM1.

It is found in the cell projection. Its subcellular location is the cilium. The protein localises to the flagellum. In terms of biological role, seems to play a role in sperm motility. This chain is Golgi-associated RAB2 interactor protein 2 (GARIN2), found in Bos taurus (Bovine).